A 347-amino-acid polypeptide reads, in one-letter code: NADH-ubiquinone oxidoreductase chain 2 (347 aa).

11 consecutive transmembrane segments (helical) span residues 1 to 21 (MNPL…SIIL), 25 to 45 (HWFM…PVLM), 59 to 79 (YFLT…INLM), 96 to 116 (LLIT…FWVP), 122 to 142 (VSLQ…LAVM), 145 to 165 (IFAS…IMIG), 178 to 198 (IMAY…IYNP), 200 to 220 (LMLL…MMFM), 242 to 262 (VLMM…GFMP), 274 to 294 (NSVI…FFYM), and 325 to 345 (LLAP…MFIL).

Belongs to the complex I subunit 2 family. Core subunit of respiratory chain NADH dehydrogenase (Complex I) which is composed of 45 different subunits. Interacts with TMEM242.

It is found in the mitochondrion inner membrane. The catalysed reaction is a ubiquinone + NADH + 5 H(+)(in) = a ubiquinol + NAD(+) + 4 H(+)(out). Functionally, core subunit of the mitochondrial membrane respiratory chain NADH dehydrogenase (Complex I) which catalyzes electron transfer from NADH through the respiratory chain, using ubiquinone as an electron acceptor. Essential for the catalytic activity and assembly of complex I. The protein is NADH-ubiquinone oxidoreductase chain 2 of Myosorex kihaulei (Kihaule's mouse shrew).